Consider the following 188-residue polypeptide: Pro-adrenomedullin (188 aa).

Residues 1–21 form the signal peptide; it reads MKLVPVALMYLGSLAFLGADT. Arginine amide is present on R41. Residues 45-92 constitute a propeptide that is removed on maturation; the sequence is ELRLSSSYPTGIADLKAGPAQTVIRPQDVKGSSRSPQASIPDAARIRV. The cysteines at positions 110 and 115 are disulfide-linked. The segment at 131 to 177 is disordered; the sequence is DKDGVAPRSKISPQGYGRRRRRSLPEASLGRTLRSQEPQAHGAPASP. Y146 carries the tyrosine amide modification. Positions 153 to 188 are cleaved as a propeptide — preproAM C-terminal fragment; that stretch reads SLPEASLGRTLRSQEPQAHGAPASPAHQVLATLFRI.

It belongs to the adrenomedullin family. In terms of tissue distribution, highly expressed in adrenal glands, lung and kidney.

The protein resides in the secreted. In terms of biological role, adrenomedullin/ADM and proadrenomedullin N-20 terminal peptide/PAMP are peptide hormones that act as potent hypotensive and vasodilatator agents. Numerous actions have been reported most related to the physiologic control of fluid and electrolyte homeostasis. ADM function is mediated by the CALCRL-RAMP2 and CALCRL-RAMP3 receptor complexes with ADM showing the highest potency for the CALCRL-RAMP2 complex. This chain is Pro-adrenomedullin (ADM), found in Sus scrofa (Pig).